The primary structure comprises 429 residues: MKLYNLKNHNEQVNFETAVKLGLGQKQGLFFPVKLPIMTPVELSKILKMDFITRSTEILSKFISSEISKEVLHEHVKKAFSFSKPLKICINKNISCFELFHGPTLAFKDFGARFMAQMILCLNKKNESFTILTATSGDTGAAVAHAFYGMKNIRVIILYPKGKITLLQEQLFCTLGKNIKTISINGSFDDCQKLVKKAFDDKKLKESIGLNSANSINISRLLAQICYYFEAFSLISEEKRKNLVIAVPCGNFGNLTAGLLAKSLGLPIQSFIACTNSNDTVPRFLNSGKWNPKKTVSTISNAMDISCPNNWPRIEELFRRKKWDLKELRFGSVSDNVTKETLKELFRMGYVSEPHAAIAYRLLHDQLKKEEFGLFLGTAHPSKFKDTVEKILENSISLPKELKNRNNLPLLSHNINPDFNKLKEFLLEK.

Lys108 is subject to N6-(pyridoxal phosphate)lysine.

This sequence belongs to the threonine synthase family. It depends on pyridoxal 5'-phosphate as a cofactor.

The catalysed reaction is O-phospho-L-homoserine + H2O = L-threonine + phosphate. The protein operates within amino-acid biosynthesis; L-threonine biosynthesis; L-threonine from L-aspartate: step 5/5. Functionally, catalyzes the gamma-elimination of phosphate from L-phosphohomoserine and the beta-addition of water to produce L-threonine. In Buchnera aphidicola subsp. Schizaphis graminum (strain Sg), this protein is Threonine synthase (thrC).